The sequence spans 273 residues: 4-hydroxybenzoate octaprenyltransferase (273 aa).

Transmembrane regions (helical) follow at residues 7-27, 30-50, 83-103, 122-142, 146-166, 197-217, 221-241, and 253-273; these read IGIY…SEGF, LKLL…GCVI, FFVL…WLTI, WTYF…LMAF, LNEI…WTVI, LIIG…SNVF, ISYH…QYLI, and FLHN…SVGL.

This sequence belongs to the UbiA prenyltransferase family. The cofactor is Mg(2+).

It is found in the cell inner membrane. The catalysed reaction is all-trans-octaprenyl diphosphate + 4-hydroxybenzoate = 4-hydroxy-3-(all-trans-octaprenyl)benzoate + diphosphate. Its pathway is cofactor biosynthesis; ubiquinone biosynthesis. In terms of biological role, catalyzes the prenylation of para-hydroxybenzoate (PHB) with an all-trans polyprenyl group. Mediates the second step in the final reaction sequence of ubiquinone-8 (UQ-8) biosynthesis, which is the condensation of the polyisoprenoid side chain with PHB, generating the first membrane-bound Q intermediate 3-octaprenyl-4-hydroxybenzoate. The sequence is that of 4-hydroxybenzoate octaprenyltransferase from Vesicomyosocius okutanii subsp. Calyptogena okutanii (strain HA).